We begin with the raw amino-acid sequence, 271 residues long: Formamidopyrimidine-DNA glycosylase (271 aa).

Pro2 acts as the Schiff-base intermediate with DNA in catalysis. The active-site Proton donor is the Glu3. Residue Lys58 is the Proton donor; for beta-elimination activity of the active site. Positions 91, 110, and 152 each coordinate DNA. An FPG-type zinc finger spans residues 237-271 (WVYGRAGQSCRQCGELVSKTRQGQRSTFFCARCQH). Residue Arg261 is the Proton donor; for delta-elimination activity of the active site.

The protein belongs to the FPG family. In terms of assembly, monomer. Zn(2+) is required as a cofactor.

The enzyme catalyses Hydrolysis of DNA containing ring-opened 7-methylguanine residues, releasing 2,6-diamino-4-hydroxy-5-(N-methyl)formamidopyrimidine.. It catalyses the reaction 2'-deoxyribonucleotide-(2'-deoxyribose 5'-phosphate)-2'-deoxyribonucleotide-DNA = a 3'-end 2'-deoxyribonucleotide-(2,3-dehydro-2,3-deoxyribose 5'-phosphate)-DNA + a 5'-end 5'-phospho-2'-deoxyribonucleoside-DNA + H(+). Functionally, involved in base excision repair of DNA damaged by oxidation or by mutagenic agents. Acts as a DNA glycosylase that recognizes and removes damaged bases. Has a preference for oxidized purines, such as 7,8-dihydro-8-oxoguanine (8-oxoG). Has AP (apurinic/apyrimidinic) lyase activity and introduces nicks in the DNA strand. Cleaves the DNA backbone by beta-delta elimination to generate a single-strand break at the site of the removed base with both 3'- and 5'-phosphates. This Nitrosomonas europaea (strain ATCC 19718 / CIP 103999 / KCTC 2705 / NBRC 14298) protein is Formamidopyrimidine-DNA glycosylase.